The sequence spans 617 residues: Probable Xaa-Pro aminopeptidase P (617 aa).

Positions 414, 425, 523, and 537 each coordinate Mn(2+).

Belongs to the peptidase M24B family. Requires Mn(2+) as cofactor.

It carries out the reaction Release of any N-terminal amino acid, including proline, that is linked to proline, even from a dipeptide or tripeptide.. In terms of biological role, catalyzes the removal of a penultimate prolyl residue from the N-termini of peptides. The protein is Probable Xaa-Pro aminopeptidase P (AMPP) of Ajellomyces capsulatus (strain G186AR / H82 / ATCC MYA-2454 / RMSCC 2432) (Darling's disease fungus).